The sequence spans 390 residues: MLNFDLLTTEGHARRGRLTLNHGVVETPIFMPVGTYGTVKGVMPRDLETMGAQIILGNTFHLWMRPGQDVMAQFGGLHRFENWTRPILTDSGGFQVWSLGEMRKISEEGVRFASPVNGDKLFLTPEVSMQIQTVLNSDIVMQFDECTPYWQGAKNVGHITTEKEARVSMELSLRWAARSKAEFARLGNPNALFGIVQGGMFESLREESLNALVELDFPGYAVGGVSVGEPKDEMLRIMNHTPHLLPADKPRYLMGVGTPEDLVDGVACGVDMFDCVMPTRNARNGHLFTRYGDLKIRNARHKADERPLDETCSCQACKGSTLPDGRVTGGFSRAYLHHLDRCGEMLGPMLASIHNLHYYLNLMREVREALDAGRFEAFRAQFKADRARGV.

D90 (proton acceptor) is an active-site residue. Substrate-binding positions include D90–F94, D144, Q197, and G224. Residues G255–D261 form an RNA binding region. Catalysis depends on D274, which acts as the Nucleophile. An RNA binding; important for wobble base 34 recognition region spans residues T279 to R283. Zn(2+)-binding residues include C312, C314, C317, and H354.

It belongs to the queuine tRNA-ribosyltransferase family. Homodimer. Within each dimer, one monomer is responsible for RNA recognition and catalysis, while the other monomer binds to the replacement base PreQ1. Requires Zn(2+) as cofactor.

It catalyses the reaction 7-aminomethyl-7-carbaguanine + guanosine(34) in tRNA = 7-aminomethyl-7-carbaguanosine(34) in tRNA + guanine. It functions in the pathway tRNA modification; tRNA-queuosine biosynthesis. In terms of biological role, catalyzes the base-exchange of a guanine (G) residue with the queuine precursor 7-aminomethyl-7-deazaguanine (PreQ1) at position 34 (anticodon wobble position) in tRNAs with GU(N) anticodons (tRNA-Asp, -Asn, -His and -Tyr). Catalysis occurs through a double-displacement mechanism. The nucleophile active site attacks the C1' of nucleotide 34 to detach the guanine base from the RNA, forming a covalent enzyme-RNA intermediate. The proton acceptor active site deprotonates the incoming PreQ1, allowing a nucleophilic attack on the C1' of the ribose to form the product. After dissociation, two additional enzymatic reactions on the tRNA convert PreQ1 to queuine (Q), resulting in the hypermodified nucleoside queuosine (7-(((4,5-cis-dihydroxy-2-cyclopenten-1-yl)amino)methyl)-7-deazaguanosine). The chain is Queuine tRNA-ribosyltransferase from Leptothrix cholodnii (strain ATCC 51168 / LMG 8142 / SP-6) (Leptothrix discophora (strain SP-6)).